Reading from the N-terminus, the 247-residue chain is Small ribosomal subunit protein uS3 (247 aa).

A KH type-2 domain is found at 39–109; it reads IRSMIRSFPE…KVQIKVKEIK (71 aa). The tract at residues 224–247 is disordered; the sequence is RSRRESGQKSDELVRDERTHAERG. Residues 227–247 show a composition bias toward basic and acidic residues; it reads RESGQKSDELVRDERTHAERG.

The protein belongs to the universal ribosomal protein uS3 family. In terms of assembly, part of the 30S ribosomal subunit. Forms a tight complex with proteins S10 and S14.

Functionally, binds the lower part of the 30S subunit head. Binds mRNA in the 70S ribosome, positioning it for translation. The sequence is that of Small ribosomal subunit protein uS3 from Treponema pallidum (strain Nichols).